A 361-amino-acid chain; its full sequence is Deoxyhypusine hydroxylase (361 aa).

4 HEAT-like PBS-type repeats span residues 59-85, 94-120, 183-211, and 216-242; these read LKHELAYVLGQLLNTRALPTLSRVLEN, VRHEAAEALGAIGAEESLPILRKYMQD, QRYRAMFALRDFGAGSKEAVEALADGFRD, and FRHEIAYIFGQLSSPYSIPSLLSRLRD. Positions 61, 62, 96, and 97 each coordinate Fe cation. Fe cation is bound by residues His218, Glu219, His251, and Glu252.

This sequence belongs to the deoxyhypusine hydroxylase family. Requires Fe(2+) as cofactor.

It localises to the cytoplasm. Its subcellular location is the nucleus. The enzyme catalyses [eIF5A protein]-deoxyhypusine + AH2 + O2 = [eIF5A protein]-hypusine + A + H2O. The protein operates within protein modification; eIF5A hypusination. Functionally, catalyzes the hydroxylation of the N(6)-(4-aminobutyl)-L-lysine intermediate to form hypusine, an essential post-translational modification only found in mature eIF-5A factor. This is Deoxyhypusine hydroxylase from Cryptococcus neoformans var. neoformans serotype D (strain JEC21 / ATCC MYA-565) (Filobasidiella neoformans).